A 60-amino-acid chain; its full sequence is Protein BNLF2a (60 aa).

Positions 14 to 26 (SSACGLPGSSTET) are enriched in polar residues. Positions 14 to 34 (SSACGLPGSSTETRPSHPCPE) are disordered. A helical transmembrane segment spans residues 41–59 (LRLLLVVLCVLFGLLCLLL).

This sequence belongs to the lymphocryptovirus BNLF2a family. Interacts with host TAP1 and TAP2.

The protein localises to the host endoplasmic reticulum membrane. In terms of biological role, participates in viral evasion from HLA class I-restricted T-cell immunity. Associates with host TAP1 and TAP2 and prevents TAP-mediated peptide transport and subsequent loading. The chain is Protein BNLF2a from Homo sapiens (Human).